The sequence spans 96 residues: uncharacterized protein (96 aa).

The signal sequence occupies residues 1-23 (MKQFYSVVLTIIIYISSQSNVVS). 3 disulfide bridges follow: C60–C74, C67–C78, and C73–C83.

It localises to the secreted. This is an uncharacterized protein from Schistosoma japonicum (Blood fluke).